The following is a 119-amino-acid chain: MVFNMRSTRGIFSSFESGYRFASYTLELSPFKTLIKIEIPMCWKPLVCASVLAWSRAIGEFGATLMLAGATRFKTETLPMAVYLNISSGDFEIAIGASLWLLFISSCLLLVLRMINRAV.

The ABC transmembrane type-1 domain maps to 1-112; the sequence is MVFNMRSTRG…FISSCLLLVL (112 aa). 2 helical membrane passes run 51-73 and 91-111; these read VLAWSRAIGEFGATLMLAGATRF and FEIAIGASLWLLFISSCLLLV.

It belongs to the binding-protein-dependent transport system permease family. CysTW subfamily.

It localises to the cell membrane. This is an uncharacterized protein from Haemophilus influenzae (strain ATCC 51907 / DSM 11121 / KW20 / Rd).